Here is a 1088-residue protein sequence, read N- to C-terminus: DEAD-box ATP-dependent RNA helicase 40 (1088 aa).

Disordered regions lie at residues 1–28 (MATT…PWKG), 47–178 (TQYE…QYAH), and 192–254 (TQGL…QNTH). Residue alanine 2 is modified to N-acetylalanine. One can recognise a WW domain in the interval 20–54 (PTLPQPWKGLIDGSTGILYYWNPETNVTQYERPSA). 3 stretches are compositionally biased toward low complexity: residues 87–137 (VGHV…SQSM), 148–171 (QTYQ…MPQQ), and 200–215 (QTPQ…PSQQ). Residues 222–231 (PKREGDEFHG) are compositionally biased toward basic and acidic residues. The span at 236–254 (GFSQPHLPNSERSPSQNTH) shows a compositional bias: polar residues. The short motif at 435–463 (ITFESSGLPPEILRELLSAGFPSPTPIQA) is the Q motif element. One can recognise a Helicase ATP-binding domain in the interval 466-640 (WPIALQSRDI…SDLLVNPVQV (175 aa)). 479 to 486 (AKTGSGKT) contacts ATP. The DEAD box motif lies at 588–591 (DEAD). The Helicase C-terminal domain occupies 669 to 813 (RLEQILRSQE…QVPPQVRDIA (145 aa)). Composition is skewed to gly residues over residues 861–885 (EGGF…GGRF), 893–902 (GRGGNRGRGF), 911–920 (NVGGRGGFGR), and 932–944 (FGRG…GRGV). The tract at residues 861 to 1033 (EGGFGGREGG…RRDRAPRVSG (173 aa)) is disordered. A compositionally biased stretch (basic and acidic residues) spans 945–963 (GRFDNRRGRSRSRSPDLVR). Low complexity predominate over residues 969–983 (SSYSRSRSRSGSYSR). A compositionally biased stretch (basic residues) spans 984 to 1013 (SRSRSRSWSRSRSRSPRHSRDRGGHNRSRS).

This sequence belongs to the DEAD box helicase family. DDX5/DBP2 subfamily.

It is found in the nucleus. It catalyses the reaction ATP + H2O = ADP + phosphate + H(+). Its function is as follows. ATP-dependent RNA helicase involved nonsense-mediated mRNA decay and ribosome biogenesis through rRNA processing. In Arabidopsis thaliana (Mouse-ear cress), this protein is DEAD-box ATP-dependent RNA helicase 40 (RH40).